Here is a 118-residue protein sequence, read N- to C-terminus: Ribonuclease P protein component (118 aa).

Belongs to the RnpA family. In terms of assembly, consists of a catalytic RNA component (M1 or rnpB) and a protein subunit.

It catalyses the reaction Endonucleolytic cleavage of RNA, removing 5'-extranucleotides from tRNA precursor.. In terms of biological role, RNaseP catalyzes the removal of the 5'-leader sequence from pre-tRNA to produce the mature 5'-terminus. It can also cleave other RNA substrates such as 4.5S RNA. The protein component plays an auxiliary but essential role in vivo by binding to the 5'-leader sequence and broadening the substrate specificity of the ribozyme. This is Ribonuclease P protein component from Shewanella frigidimarina (strain NCIMB 400).